The following is a 303-amino-acid chain: Small ribosomal subunit protein bS1m (303 aa).

The residue at position 2 (serine 2) is an N-acetylserine. Residues 2–13 (SFAQILRGSRAM) constitute a mitochondrion; not cleaved transit peptide.

This sequence belongs to the bacterial ribosomal protein bS1 family. As to quaternary structure, component of the mitochondrial small ribosomal subunit (mt-SSU). Mature yeast 74S mitochondrial ribosomes consist of a small (37S) and a large (54S) subunit. The 37S small subunit contains a 15S ribosomal RNA (15S mt-rRNA) and at least 32 different proteins. The 54S large subunit contains a 21S rRNA (21S mt-rRNA) and at least 45 different proteins. This subunit is mutually exclusive with mug178/small ribosomal subunit protein L51-b.

It localises to the mitochondrion. Its function is as follows. Component of the mitochondrial ribosome (mitoribosome), a dedicated translation machinery responsible for the synthesis of mitochondrial genome-encoded proteins, including at least some of the essential transmembrane subunits of the mitochondrial respiratory chain. The mitoribosomes are attached to the mitochondrial inner membrane and translation products are cotranslationally integrated into the membrane. bS1m functionally interacts with the 5'-UTR of mitochondrial mRNAs. Plays an essential role in mitochondrial translation. The sequence is that of Small ribosomal subunit protein bS1m (mrp51) from Schizosaccharomyces pombe (strain 972 / ATCC 24843) (Fission yeast).